We begin with the raw amino-acid sequence, 1378 residues long: DNA-directed RNA polymerase subunit beta (1378 aa).

It belongs to the RNA polymerase beta chain family. The RNAP catalytic core consists of 2 alpha, 1 beta, 1 beta' and 1 omega subunit. When a sigma factor is associated with the core the holoenzyme is formed, which can initiate transcription.

The catalysed reaction is RNA(n) + a ribonucleoside 5'-triphosphate = RNA(n+1) + diphosphate. Functionally, DNA-dependent RNA polymerase catalyzes the transcription of DNA into RNA using the four ribonucleoside triphosphates as substrates. The polypeptide is DNA-directed RNA polymerase subunit beta (Agrobacterium fabrum (strain C58 / ATCC 33970) (Agrobacterium tumefaciens (strain C58))).